Consider the following 287-residue polypeptide: Thymidylate synthase (287 aa).

R21 is a binding site for dUMP. H51 contributes to the (6R)-5,10-methylene-5,6,7,8-tetrahydrofolate binding site. 150–151 contacts dUMP; it reads RR. C170 serves as the catalytic Nucleophile. DUMP is bound by residues 190-193, N201, and 231-233; these read RSGD and HIY. D193 contributes to the (6R)-5,10-methylene-5,6,7,8-tetrahydrofolate binding site. A286 provides a ligand contact to (6R)-5,10-methylene-5,6,7,8-tetrahydrofolate.

This sequence belongs to the thymidylate synthase family. Bacterial-type ThyA subfamily. In terms of assembly, homodimer.

It localises to the cytoplasm. It carries out the reaction dUMP + (6R)-5,10-methylene-5,6,7,8-tetrahydrofolate = 7,8-dihydrofolate + dTMP. It functions in the pathway pyrimidine metabolism; dTTP biosynthesis. Catalyzes the reductive methylation of 2'-deoxyuridine-5'-monophosphate (dUMP) to 2'-deoxythymidine-5'-monophosphate (dTMP) while utilizing 5,10-methylenetetrahydrofolate (mTHF) as the methyl donor and reductant in the reaction, yielding dihydrofolate (DHF) as a by-product. This enzymatic reaction provides an intracellular de novo source of dTMP, an essential precursor for DNA biosynthesis. This is Thymidylate synthase from Mycoplasma pneumoniae (strain ATCC 29342 / M129 / Subtype 1) (Mycoplasmoides pneumoniae).